Here is a 238-residue protein sequence, read N- to C-terminus: Orotidine 5'-phosphate decarboxylase (238 aa).

Substrate-binding positions include Asp11, Lys32, 59-68, Thr123, Arg185, Gln194, Gly214, and Arg215; that span reads DLKFHDIPNT. Residue Lys61 is the Proton donor of the active site.

The protein belongs to the OMP decarboxylase family. Type 1 subfamily. As to quaternary structure, homodimer.

It carries out the reaction orotidine 5'-phosphate + H(+) = UMP + CO2. Its pathway is pyrimidine metabolism; UMP biosynthesis via de novo pathway; UMP from orotate: step 2/2. Functionally, catalyzes the decarboxylation of orotidine 5'-monophosphate (OMP) to uridine 5'-monophosphate (UMP). The polypeptide is Orotidine 5'-phosphate decarboxylase (Nostoc sp. (strain PCC 7120 / SAG 25.82 / UTEX 2576)).